Consider the following 66-residue polypeptide: Conotoxin Cl14.1b (66 aa).

The N-terminal stretch at 1–19 (MNVTVMFLVLLLTMPLTDG) is a signal peptide. Positions 20–47 (FNIRAINGGELFGLVQRDAGNALDHGFY) are excised as a propeptide.

Belongs to the conotoxin L superfamily. In terms of processing, contains 2 disulfide bonds. As to expression, expressed by the venom duct.

The protein resides in the secreted. The protein is Conotoxin Cl14.1b of Californiconus californicus (California cone).